Consider the following 588-residue polypeptide: BTB/POZ domain-containing protein At3g26490 (588 aa).

The BTB domain occupies 28–99; sequence NDLVIQVKST…CYGITITLCA (72 aa). One can recognise an NPH3 domain in the interval 218–507; it reads RWWGEDLAEL…VQILFVEQAR (290 aa). Phosphoserine occurs at positions 376 and 378. Phosphotyrosine is present on Y448. The tract at residues 529–554 is disordered; that stretch reads FTTRREEGGQEEEERDETKPSGGFLQ.

Belongs to the NPH3 family.

The protein operates within protein modification; protein ubiquitination. In terms of biological role, may act as a substrate-specific adapter of an E3 ubiquitin-protein ligase complex (CUL3-RBX1-BTB) which mediates the ubiquitination and subsequent proteasomal degradation of target proteins. The polypeptide is BTB/POZ domain-containing protein At3g26490 (Arabidopsis thaliana (Mouse-ear cress)).